Consider the following 109-residue polypeptide: Enhancer of rudimentary homolog (109 aa).

Belongs to the E(R) family. As to quaternary structure, homodimer.

May have a role in the cell cycle. This Arabidopsis thaliana (Mouse-ear cress) protein is Enhancer of rudimentary homolog.